We begin with the raw amino-acid sequence, 103 residues long: OMEGA-ectatommitoxin(02)-Rm1d (103 aa).

The signal sequence occupies residues M1–R30. Intrachain disulfides connect C39–C54, C49–C70, and C72–C81. The region spanning L43–G82 is the EGF-like domain.

The protein belongs to the EGF domain peptide family. In terms of tissue distribution, expressed by the venom gland.

It is found in the secreted. In terms of biological role, ant peptide with probable defensive activity which acts as a potent agonist of the mammalian epidermal growth factor receptor (EGFR). Mimics, both structurally and functionally, vertebrate epidermal growth factor (EGF) peptide hormones. In vivo, intraplantar injection in mice causes long-lasting (several days) hypersensitivity of the injected paw to both mechanical and thermal stimuli. Its long-lasting effect is unusual for venom toxins whose effects are usually immediate. One possible explanation is that it would reduce the duration of a nest attack, discourage future attacks, or enhance the actions of subsequent exposure to other pain-inducing venom peptides. In Rhytidoponera metallica (Australian green-headed ant), this protein is OMEGA-ectatommitoxin(02)-Rm1d.